The following is a 430-amino-acid chain: GTPase Obg (430 aa).

The Obg domain maps to 1–158 (MFIDTAKVFV…LNIVLELKLL (158 aa)). Residues 159-331 (ADVGLLGFPN…VMKEAARILK (173 aa)) enclose the OBG-type G domain. Residues 165–172 (GFPNVGKS), 190–194 (FTTLK), 212–215 (DIPG), 282–285 (NKSD), and 312–314 (SAA) each bind GTP. Residues S172 and T192 each coordinate Mg(2+). The region spanning 345 to 430 (MYIPEEKRFT…LNDFEFEYIL (86 aa)) is the OCT domain.

It belongs to the TRAFAC class OBG-HflX-like GTPase superfamily. OBG GTPase family. Monomer. Mg(2+) serves as cofactor.

Its subcellular location is the cytoplasm. An essential GTPase which binds GTP, GDP and possibly (p)ppGpp with moderate affinity, with high nucleotide exchange rates and a fairly low GTP hydrolysis rate. Plays a role in control of the cell cycle, stress response, ribosome biogenesis and in those bacteria that undergo differentiation, in morphogenesis control. The protein is GTPase Obg of Clostridium beijerinckii (strain ATCC 51743 / NCIMB 8052) (Clostridium acetobutylicum).